The sequence spans 226 residues: MSSGAGSDATGAGGVHAAGSGDRAVAAAVERAKATAARNIPAFDDLPVPADTANLREGADLNNALLALLPLVGVWRGEGEGRGPDGDYRFGQQIVVSHDGGDYLNWESRSWRLTATGDYQEPGLREAGFWRFVADPYDPSESQAIELLLAHSAGYVELFYGRPRTQSSWELVTDALARSRSGVLVGGAKRLYGIVEGGDLAYVEERVDADGGLVPHLSARLSRFVG.

Residues 73 to 79 (GVWRGEG) carry the GXWXGXG motif. Positions 189 and 216 each coordinate heme b.

This sequence belongs to the nitrobindin family. Homodimer. Heme b is required as a cofactor.

The enzyme catalyses peroxynitrite = nitrate. The protein operates within nitrogen metabolism. Its function is as follows. Heme-binding protein able to scavenge peroxynitrite and to protect free L-tyrosine against peroxynitrite-mediated nitration, by acting as a peroxynitrite isomerase that converts peroxynitrite to nitrate. Therefore, this protein likely plays a role in peroxynitrite sensing and in the detoxification of reactive nitrogen and oxygen species (RNS and ROS, respectively). Is able to bind nitric oxide (NO) in vitro, but may act as a sensor of peroxynitrite levels in vivo. The polypeptide is Peroxynitrite isomerase 2 (Mycobacterium bovis (strain ATCC BAA-935 / AF2122/97)).